We begin with the raw amino-acid sequence, 396 residues long: Probable 20S rRNA accumulation protein 4 (396 aa).

This sequence belongs to the TSR4 family.

Its subcellular location is the cytoplasm. It is found in the nucleus. The protein localises to the nucleolus. Functionally, required for processing of the 20S pre-rRNA at site D to generate mature 18S rRNA. In Schizosaccharomyces pombe (strain 972 / ATCC 24843) (Fission yeast), this protein is Probable 20S rRNA accumulation protein 4.